The chain runs to 563 residues: Arginine--tRNA ligase (563 aa).

The 'HIGH' region signature appears at 120–130 (PNIAKPFHIGH).

This sequence belongs to the class-I aminoacyl-tRNA synthetase family. As to quaternary structure, monomer.

The protein resides in the cytoplasm. The catalysed reaction is tRNA(Arg) + L-arginine + ATP = L-arginyl-tRNA(Arg) + AMP + diphosphate. This chain is Arginine--tRNA ligase, found in Clostridium botulinum (strain Loch Maree / Type A3).